Here is a 458-residue protein sequence, read N- to C-terminus: Ammonium transporter Rh type B (458 aa).

The Cytoplasmic portion of the chain corresponds to 1–13; the sequence is MAGSPSRAAGRRL. A helical transmembrane segment spans residues 14 to 34; that stretch reads QLPLLCLFLQGATAVLFAVFV. The Extracellular segment spans residues 35–61; sequence RYNHKTDAALWHRSNHSNADNEFYFRY. A glycan (N-linked (GlcNAc...) asparagine) is linked at Asn49. The chain crosses the membrane as a helical span at residues 62 to 82; that stretch reads PSFQDVHAMVFVGFGFLMVFL. Over 83 to 86 the chain is Cytoplasmic; that stretch reads QRYG. The helical transmembrane segment at 87–107 threads the bilayer; the sequence is FSSVGFTFLLAAFALQWSTLV. At 108–124 the chain is on the extracellular side; sequence QGFLHSFHGGHIHVGVE. A helical transmembrane segment spans residues 125–145; sequence SMINADFCAGAVLISFGAVLG. Residues 146–149 lie on the Cytoplasmic side of the membrane; the sequence is KTGP. Residues 150-170 form a helical membrane-spanning segment; that stretch reads AQLLLMALLEVVLFGINEFVL. Residues 171 to 178 lie on the Extracellular side of the membrane; sequence LHLLGVRD. A helical membrane pass occupies residues 179–201; it reads AGGSMTIHTFGAYFGLVLSRVLY. Residues 202–219 are Cytoplasmic-facing; sequence RPQLEKSKHRQGSVYHSD. A helical transmembrane segment spans residues 220-240; it reads LFAMIGTIFLWIFWPSFNAAL. At 241–251 the chain is on the extracellular side; it reads TALGAGQHRTA. Residues 252–272 traverse the membrane as a helical segment; it reads LNTYYSLAASTLGTFALSALV. Residues 273–282 are Cytoplasmic-facing; that stretch reads GEDGRLDMVH. A helical transmembrane segment spans residues 283 to 303; the sequence is IQNAALAGGVVVGTSSEMMLT. A topological domain (extracellular) is located at residue Pro304. A helical membrane pass occupies residues 305 to 325; the sequence is FGALTAGFLAGTVSTLGYKFF. Residues 326–346 are Cytoplasmic-facing; the sequence is RPILESKFKVQDTCGVHNLHG. Residues 347-367 traverse the membrane as a helical segment; sequence MPGVLGALLGVLVAGLATHEA. Residues 368-393 are Extracellular-facing; the sequence is YGDGLESVFPLIAEGQRSATSQAMHQ. A helical transmembrane segment spans residues 394–414; that stretch reads LFGLFVTLMFASVGGGLGGLL. At 415–458 the chain is on the cytoplasmic side; sequence LKLPFLDSPPDSQCYEDQVHWQVPGEHEDKAQRPLRVEEADTQA. Positions 416-424 are interaction with ANK3; it reads KLPFLDSPP. The Basolateral sorting signal motif lies at 429-432; that stretch reads YEDQ. Positions 439-458 are disordered; sequence GEHEDKAQRPLRVEEADTQA.

This sequence belongs to the ammonium transporter (TC 2.A.49) family. Rh subfamily. In terms of assembly, interacts (via C-terminus) with ANK2 and ANK3; required for targeting to the basolateral membrane. N-glycosylated.

It is found in the cell membrane. The protein resides in the basolateral cell membrane. The catalysed reaction is NH4(+)(in) = NH4(+)(out). It carries out the reaction methylamine(out) = methylamine(in). The enzyme catalyses CO2(out) = CO2(in). Ammonium transporter involved in the maintenance of acid-base homeostasis. Transports ammonium and its related derivative methylammonium across the basolateral plasma membrane of epithelial cells likely contributing to renal transepithelial ammonia transport and ammonia metabolism. May transport either NH4(+) or NH3 ammonia species predominantly mediating an electrogenic NH4(+) transport. May act as a CO2 channel providing for renal acid secretion. This is Ammonium transporter Rh type B (RHBG) from Pan troglodytes (Chimpanzee).